The sequence spans 486 residues: Bifunctional protein GlmU (486 aa).

A pyrophosphorylase region spans residues 1-236; sequence MTDQNLAIVV…SWLVDGINDR (236 aa). UDP-N-acetyl-alpha-D-glucosamine contacts are provided by residues 11–14, Lys-25, Gln-78, and 83–84; these read LAAG and GT. Asp-109 is a Mg(2+) binding site. 4 residues coordinate UDP-N-acetyl-alpha-D-glucosamine: Gly-146, Glu-161, Asn-176, and Asn-234. A Mg(2+)-binding site is contributed by Asn-234. Residues 237–257 form a linker region; sequence AQLSEAAAKLNALTVRAWQLA. The N-acetyltransferase stretch occupies residues 258–486; that stretch reads GVTVQDPATT…ASNAAEESGE (229 aa). Residues Arg-339 and Lys-357 each contribute to the UDP-N-acetyl-alpha-D-glucosamine site. Residue His-369 is the Proton acceptor of the active site. UDP-N-acetyl-alpha-D-glucosamine is bound by residues Tyr-372 and Asn-383. Residues Ala-386, 392 to 393, and Ala-429 each bind acetyl-CoA; that span reads NY. The segment at 459–486 is disordered; sequence RRPGTDAARAAQRNGAAEASNAAEESGE. A compositionally biased stretch (low complexity) spans 465-486; that stretch reads AARAAQRNGAAEASNAAEESGE.

This sequence in the N-terminal section; belongs to the N-acetylglucosamine-1-phosphate uridyltransferase family. It in the C-terminal section; belongs to the transferase hexapeptide repeat family. As to quaternary structure, homotrimer. Mg(2+) is required as a cofactor.

The protein resides in the cytoplasm. The enzyme catalyses alpha-D-glucosamine 1-phosphate + acetyl-CoA = N-acetyl-alpha-D-glucosamine 1-phosphate + CoA + H(+). The catalysed reaction is N-acetyl-alpha-D-glucosamine 1-phosphate + UTP + H(+) = UDP-N-acetyl-alpha-D-glucosamine + diphosphate. It participates in nucleotide-sugar biosynthesis; UDP-N-acetyl-alpha-D-glucosamine biosynthesis; N-acetyl-alpha-D-glucosamine 1-phosphate from alpha-D-glucosamine 6-phosphate (route II): step 2/2. It functions in the pathway nucleotide-sugar biosynthesis; UDP-N-acetyl-alpha-D-glucosamine biosynthesis; UDP-N-acetyl-alpha-D-glucosamine from N-acetyl-alpha-D-glucosamine 1-phosphate: step 1/1. Its pathway is bacterial outer membrane biogenesis; LPS lipid A biosynthesis. In terms of biological role, catalyzes the last two sequential reactions in the de novo biosynthetic pathway for UDP-N-acetylglucosamine (UDP-GlcNAc). The C-terminal domain catalyzes the transfer of acetyl group from acetyl coenzyme A to glucosamine-1-phosphate (GlcN-1-P) to produce N-acetylglucosamine-1-phosphate (GlcNAc-1-P), which is converted into UDP-GlcNAc by the transfer of uridine 5-monophosphate (from uridine 5-triphosphate), a reaction catalyzed by the N-terminal domain. In Leifsonia xyli subsp. xyli (strain CTCB07), this protein is Bifunctional protein GlmU.